Here is a 436-residue protein sequence, read N- to C-terminus: Magnesium transporter MRS2-4 (436 aa).

The interval 1–56 (MGKGPLSFRRLSSIRHRKKGSAVKDDSAQTSTPSSPPPPLPIHAGGSAVGATGKAK) is disordered. Over residues 12-21 (SSIRHRKKGS) the composition is skewed to basic residues. Positions 44–53 (AGGSAVGATG) are enriched in low complexity. A run of 2 helical transmembrane segments spans residues 372-392 (LTLT…SLFG) and 405-425 (VFGY…MVTL). Residues 392–394 (GMN) carry the Required for magnesium transport activity motif.

The protein belongs to the CorA metal ion transporter (MIT) (TC 1.A.35.5) family. In terms of tissue distribution, expressed in the whole plant except roots.

The protein localises to the membrane. In terms of biological role, magnesium transporter that may mediate the influx of magnesium. The sequence is that of Magnesium transporter MRS2-4 (MRS2-4) from Arabidopsis thaliana (Mouse-ear cress).